A 358-amino-acid polypeptide reads, in one-letter code: Neutral protease 2 homolog MGYG_02351 (358 aa).

An N-terminal signal peptide occupies residues 1–17 (MQFVALLAALGAPLALA). The propeptide occupies 18-183 (ASIPAAHNNS…DSPAGVIDKR (166 aa)). Cystine bridges form between Cys-191/Cys-260 and Cys-267/Cys-285. His-309 serves as a coordination point for Zn(2+). Glu-310 is an active-site residue. Zn(2+)-binding residues include His-313 and Asp-324.

This sequence belongs to the peptidase M35 family. The cofactor is Zn(2+).

It localises to the secreted. It carries out the reaction Preferential cleavage of bonds with hydrophobic residues in P1'. Also 3-Asn-|-Gln-4 and 8-Gly-|-Ser-9 bonds in insulin B chain.. Its function is as follows. Secreted metalloproteinase that allows assimilation of proteinaceous substrates. Shows high activities on basic nuclear substrates such as histone and protamine. May be involved in virulence. In Arthroderma gypseum (strain ATCC MYA-4604 / CBS 118893) (Microsporum gypseum), this protein is Neutral protease 2 homolog MGYG_02351.